Here is a 152-residue protein sequence, read N- to C-terminus: Ubiquitin-conjugating enzyme E2 2 (152 aa).

The UBC core domain maps to 4–150 (PARKRLMRDF…VREVVEQSWT (147 aa)). Cys88 functions as the Glycyl thioester intermediate in the catalytic mechanism.

It belongs to the ubiquitin-conjugating enzyme family. As to expression, expressed in all tissues examined. Lower levels found in leaves.

It catalyses the reaction S-ubiquitinyl-[E1 ubiquitin-activating enzyme]-L-cysteine + [E2 ubiquitin-conjugating enzyme]-L-cysteine = [E1 ubiquitin-activating enzyme]-L-cysteine + S-ubiquitinyl-[E2 ubiquitin-conjugating enzyme]-L-cysteine.. The protein operates within protein modification; protein ubiquitination. Its function is as follows. Accepts the ubiquitin from the E1 complex and catalyzes its covalent attachment to other proteins. This Arabidopsis thaliana (Mouse-ear cress) protein is Ubiquitin-conjugating enzyme E2 2 (UBC2).